Consider the following 406-residue polypeptide: MTLDVGPEDELPDWAAAKEFYQKYDPKDIIGRGVSSVVRRCVHRATGDEFAVKIMEVSAERLSLEQLEEVRDATRREMHILRQVAGHPHIITLIDSYESSSFMFLVFDLMRKGELFDYLTEKVALSEKETRSIMRSLLEAVSFLHANNIVHRDLKPENILLDDNMQIRLSDFGFSCHLEAGEKLRELCGTPGYLAPEILKCSMDETHPGYGKEVDLWACGVILFTLLAGSPPFWHRRQILMLRMIMEGQYQFTSPEWDDRSNTVKDLISKLLQVDPEARLTAEQALQHPFFERCEGSQPWNLTPRQRFRVAVWTILAAGRVALSSHRLRPLTKNALLRDPYALRPVRRLIDNCAFRLYGHWVKKGEQQNRAALFQHQPPRLFPIAATELEGDSGAITEDEATLVRS.

A Protein kinase domain is found at 24 to 291 (YDPKDIIGRG…AEQALQHPFF (268 aa)). ATP contacts are provided by residues 30–38 (IGRGVSSVV) and Lys-53. Asp-153 acts as the Proton acceptor in catalysis. The calmodulin-binding (domain-N) stretch occupies residues 306–330 (QRFRVAVWTILAAGRVALSSHRLRP). The calmodulin-binding (domain-C) stretch occupies residues 346–370 (VRRLIDNCAFRLYGHWVKKGEQQNR).

The protein belongs to the protein kinase superfamily. CAMK Ser/Thr protein kinase family. Hexadecamer of 4 heterotetramers, each composed of alpha, beta, gamma, and delta subunits. Alpha (PHKA1 or PHKA2) and beta (PHKB) are regulatory subunits, gamma (PHKG1 or PHKG2) is the catalytic subunit, and delta is calmodulin.

It catalyses the reaction 2 ATP + phosphorylase b = 2 ADP + phosphorylase a.. Functionally, catalytic subunit of the phosphorylase b kinase (PHK), which mediates the neural and hormonal regulation of glycogen breakdown (glycogenolysis) by phosphorylating and thereby activating glycogen phosphorylase. May regulate glycogeneolysis in the testis. In vitro, phosphorylates PYGM. This is Phosphorylase b kinase gamma catalytic chain, liver/testis isoform (Phkg2) from Mus musculus (Mouse).